The primary structure comprises 260 residues: Triosephosphate isomerase (260 aa).

Residue 10–12 (NWK) coordinates substrate. H100 serves as the catalytic Electrophile. E172 serves as the catalytic Proton acceptor. Substrate-binding positions include G178, S218, and 239-240 (GG).

The protein belongs to the triosephosphate isomerase family. Homodimer.

The protein localises to the cytoplasm. It carries out the reaction D-glyceraldehyde 3-phosphate = dihydroxyacetone phosphate. Its pathway is carbohydrate biosynthesis; gluconeogenesis. It functions in the pathway carbohydrate degradation; glycolysis; D-glyceraldehyde 3-phosphate from glycerone phosphate: step 1/1. Functionally, involved in the gluconeogenesis. Catalyzes stereospecifically the conversion of dihydroxyacetone phosphate (DHAP) to D-glyceraldehyde-3-phosphate (G3P). The polypeptide is Triosephosphate isomerase (Corynebacterium diphtheriae (strain ATCC 700971 / NCTC 13129 / Biotype gravis)).